Here is a 237-residue protein sequence, read N- to C-terminus: Orotidine 5'-phosphate decarboxylase (237 aa).

Substrate is bound by residues Asp10, Lys32, 59-68 (DLKLHDIPNT), Thr118, Arg180, Gln189, Gly209, and Arg210. Residue Lys61 is the Proton donor of the active site.

It belongs to the OMP decarboxylase family. Type 1 subfamily. In terms of assembly, homodimer.

It catalyses the reaction orotidine 5'-phosphate + H(+) = UMP + CO2. It functions in the pathway pyrimidine metabolism; UMP biosynthesis via de novo pathway; UMP from orotate: step 2/2. Catalyzes the decarboxylation of orotidine 5'-monophosphate (OMP) to uridine 5'-monophosphate (UMP). The protein is Orotidine 5'-phosphate decarboxylase of Fusobacterium nucleatum subsp. nucleatum (strain ATCC 25586 / DSM 15643 / BCRC 10681 / CIP 101130 / JCM 8532 / KCTC 2640 / LMG 13131 / VPI 4355).